Consider the following 400-residue polypeptide: PHD finger protein 24 (400 aa).

The N-myristoyl glycine moiety is linked to residue Gly-2. Positions 28–38 (LRDRPSIRRTG) are enriched in basic and acidic residues. Positions 28–99 (LRDRPSIRRT…PEEFDRTSRF (72 aa)) are disordered. Arg-36 carries the post-translational modification Omega-N-methylarginine. Ser-43 carries the post-translational modification Phosphoserine. A Phosphothreonine modification is found at Thr-47. Ser-51 carries the post-translational modification Phosphoserine. Basic and acidic residues predominate over residues 78 to 97 (AWERLRDGRGVEPEEFDRTS). A PHD-type zinc finger spans residues 129–190 (NDEMCDVCEV…TGWSCHYCDN (62 aa)).

This Homo sapiens (Human) protein is PHD finger protein 24.